A 397-amino-acid polypeptide reads, in one-letter code: Cercosporin biosynthesis regulatory protein CTB8 (397 aa).

Positions 26–53 form a DNA-binding region, zn(2)-C6 fungal-type; that stretch reads CTHCSSQKIRCTKERPACARCVNKGLLC. 2 disordered regions span residues 63-90 and 173-198; these read TRRH…APDS and AEAS…ATTH. Over residues 74–87 the composition is skewed to polar residues; that stretch reads PETTISNAPTSSVA. The span at 179–197 shows a compositional bias: low complexity; that stretch reads PSSSSSPPSQRSDGGRATT.

The protein resides in the nucleus. In terms of biological role, transcription regulator of the gene cluster that mediates the biosynthesis of cercosporin, a light-activated, non-host-selective toxin. The perylenequinone chromophore of cercosporin absorbs light energy to attain an electronically-activated triplet state and produces active oxygen species such as the hydroxyl radical, superoxide, hydrogen peroxide or singlet oxygen upon reaction with oxygen molecules. These reactive oxygen species cause damage to various cellular components including lipids, proteins and nucleic acids. This is Cercosporin biosynthesis regulatory protein CTB8 from Cercospora beticola (Sugarbeet leaf spot fungus).